Reading from the N-terminus, the 213-residue chain is MKALKIALTKGRLEKDAVALLEKAGIDCSSMTDKKRKLIFHSSTQPISFILVKAVDVMTYVKHGVADIGIVGKDVLMEASKSHYEMLDLEIGKCQFCLASTPDFDPSSYRRKIIATKYPTVASKFFREKGEDVEIIKIEGSVEIAPVLGLADAIIDIVETGSTLKENGLLIYEKMYPISARLIVNKASLKQNKTQIFQLIDQLEQVIKEERAE.

It belongs to the ATP phosphoribosyltransferase family. Short subfamily. Heteromultimer composed of HisG and HisZ subunits.

Its subcellular location is the cytoplasm. The catalysed reaction is 1-(5-phospho-beta-D-ribosyl)-ATP + diphosphate = 5-phospho-alpha-D-ribose 1-diphosphate + ATP. It functions in the pathway amino-acid biosynthesis; L-histidine biosynthesis; L-histidine from 5-phospho-alpha-D-ribose 1-diphosphate: step 1/9. Functionally, catalyzes the condensation of ATP and 5-phosphoribose 1-diphosphate to form N'-(5'-phosphoribosyl)-ATP (PR-ATP). Has a crucial role in the pathway because the rate of histidine biosynthesis seems to be controlled primarily by regulation of HisG enzymatic activity. This Listeria monocytogenes serotype 4b (strain F2365) protein is ATP phosphoribosyltransferase.